Consider the following 70-residue polypeptide: Turripeptide Pal9.2 (70 aa).

The first 20 residues, 1 to 20 (MKVYCLLVVLLVGLVSQTQG), serve as a signal peptide directing secretion. A Kazal-like domain is found at 21–70 (QLDKKCNMACTLDYRPVCGSDGKTYPNRCALTSTACESQQSITVLHDGEC). Cystine bridges form between Cys26/Cys56, Cys30/Cys49, and Cys38/Cys70.

It belongs to the conopeptide P-like superfamily. As to expression, expressed by the venom duct.

Its subcellular location is the secreted. Functionally, acts as a neurotoxin by inhibiting an ion channel. May also act as a serine protease inhibitor, since it possess the kazal serine protease inhibitor signature. This is Turripeptide Pal9.2 from Polystira albida (White giant-turris).